The sequence spans 22 residues: 65 kDa membrane protein (22 aa).

The interval 1 to 22 is disordered; sequence AAKPLDKSSSSLHHGYSKVHVP.

It localises to the cell membrane. Its function is as follows. Binds various plasma and ECM-proteins. The polypeptide is 65 kDa membrane protein (Staphylococcus aureus).